A 23-amino-acid polypeptide reads, in one-letter code: HDRPKFCYLPADPGECLAHMRSF.

The region spanning 7-23 (CYLPADPGECLAHMRSF) is the BPTI/Kunitz inhibitor domain.

Belongs to the venom Kunitz-type family. Expressed by the venom gland.

The protein localises to the secreted. In terms of biological role, serine protease inhibitor that inhibits chymotrypsin. This is Kunitz-type serine protease inhibitor C8 from Daboia siamensis (Eastern Russel's viper).